The sequence spans 465 residues: Asparagine--tRNA ligase (465 aa).

It belongs to the class-II aminoacyl-tRNA synthetase family. Homodimer.

It localises to the cytoplasm. It carries out the reaction tRNA(Asn) + L-asparagine + ATP = L-asparaginyl-tRNA(Asn) + AMP + diphosphate + H(+). This chain is Asparagine--tRNA ligase, found in Pseudoalteromonas atlantica (strain T6c / ATCC BAA-1087).